Reading from the N-terminus, the 220-residue chain is Translation initiation factor IF-3 (220 aa).

The disordered stretch occupies residues 182 to 220 (TPLVKKDDKEEPATRAVRTITAPPRPTSARLASKPAGNG). Basic and acidic residues predominate over residues 185–194 (VKKDDKEEPA).

This sequence belongs to the IF-3 family. As to quaternary structure, monomer.

The protein resides in the cytoplasm. In terms of biological role, IF-3 binds to the 30S ribosomal subunit and shifts the equilibrium between 70S ribosomes and their 50S and 30S subunits in favor of the free subunits, thus enhancing the availability of 30S subunits on which protein synthesis initiation begins. This chain is Translation initiation factor IF-3, found in Synechococcus sp. (strain WH7803).